Here is a 45-residue protein sequence, read N- to C-terminus: uncharacterized protein (45 aa).

This is an uncharacterized protein from Bacillus subtilis (strain 168).